The primary structure comprises 298 residues: Cyclin-dependent kinase 2 (298 aa).

One can recognise a Protein kinase domain in the interval 4–286; sequence FQKVEKIGEG…AKNALVHRFF (283 aa). ATP contacts are provided by residues 10 to 18, lysine 33, 81 to 83, and aspartate 86; these read IGEGTYGVV and EFL. Threonine 14 is modified (phosphothreonine). Tyrosine 15 bears the Phosphotyrosine mark. The active-site Proton acceptor is aspartate 127. ATP contacts are provided by residues 129–132 and aspartate 145; that span reads KPQN. Threonine 160 is subject to Phosphothreonine; by CAK.

It belongs to the protein kinase superfamily. CMGC Ser/Thr protein kinase family. CDC2/CDKX subfamily.

It carries out the reaction L-seryl-[protein] + ATP = O-phospho-L-seryl-[protein] + ADP + H(+). The catalysed reaction is L-threonyl-[protein] + ATP = O-phospho-L-threonyl-[protein] + ADP + H(+). Its activity is regulated as follows. Phosphorylation at Thr-14 or Tyr-15 inactivates the enzyme, while phosphorylation at Thr-160 activates it. In terms of biological role, serine/threonine-protein kinase involved in the control of the cell cycle; essential for meiosis, but dispensable for mitosis. Triggers duplication of centrosomes and DNA. Acts at the G1-S transition to promote the E2F transcriptional program and the initiation of DNA synthesis, and modulates G2 progression; controls the timing of entry into mitosis/meiosis by controlling the subsequent activation of cyclin B/CDK1 by phosphorylation, and coordinates the activation of cyclin B/CDK1 at the centrosome and in the nucleus. Crucial role in orchestrating a fine balance between cellular proliferation, cell death, and DNA repair in embryonic stem cells (ESCs). Activity of CDK2 is maximal during S phase and G2; activated by interaction with cyclin E during the early stages of DNA synthesis to permit G1-S transition, and subsequently activated by cyclin A2 (cyclin A1 in germ cells) during the late stages of DNA replication to drive the transition from S phase to mitosis, the G2 phase. The protein is Cyclin-dependent kinase 2 (cdk2) of Carassius auratus (Goldfish).